A 233-amino-acid polypeptide reads, in one-letter code: Eukaryotic translation initiation factor 4E-1 (233 aa).

The interval methionine 1 to alanine 51 is disordered. The segment covering aspartate 14–glutamate 26 has biased composition (basic and acidic residues). The span at glutamate 27–glutamate 41 shows a compositional bias: acidic residues. EIF4G-binding stretches follow at residues histidine 55–glutamate 58 and phenylalanine 65–arginine 104. Residues lysine 76 to glycine 81, lysine 108, and tryptophan 126 to glutamate 127 contribute to the mRNA site. Cysteine 131 and cysteine 169 are joined by a disulfide. The interval tyrosine 152–glutamine 161 is EIF4G-binding. Residues arginine 176–lysine 181 and methionine 221–arginine 225 each bind mRNA.

This sequence belongs to the eukaryotic initiation factor 4E family. In terms of assembly, EIF4F is a multi-subunit complex, the composition of which varies with external and internal environmental conditions. It is composed of at least EIF4A, EIF4E and EIF4G. EIF4E is also known to interact with other partners. In higher plants two isoforms of EIF4F have been identified, named isoform EIF4F and isoform EIF(iso)4F. Isoform EIF4F has subunits p220 and p26, whereas isoform EIF(iso)4F has subunits p82 and p28. (Microbial infection) Does not interact with the VPg of Plum pox virus (PPV) strain D. In terms of processing, according to the redox status, the Cys-131-Cys-169 disulfide bridge may have a role in regulating protein function by affecting its ability to bind capped mRNA. Mostly expressed in leaves, flower buds, leaf buds and anthers, to a lower extent in roots, stems and green immature fruit, and, at low levels, in petals.

The protein resides in the nucleus. It localises to the cytoplasm. Functionally, component of the protein complex eIF4F, which is involved in the recognition of the mRNA cap, ATP-dependent unwinding of 5'-terminal secondary structure and recruitment of mRNA to the ribosome. Recognizes and binds the 7-methylguanosine-containing mRNA cap during an early step in the initiation of protein synthesis and facilitates ribosome binding by inducing the unwinding of the mRNAs secondary structures. In terms of biological role, (Microbial infection) Not involved in the plum pox virus (PPV) strain D infection process. The sequence is that of Eukaryotic translation initiation factor 4E-1 from Prunus domestica (Garden plum).